A 790-amino-acid polypeptide reads, in one-letter code: MELSEGELSHTSSSSSFVPVDQRQLQDAIQIIDENKHFNTGILDYINKTSPADVGNNYHIISVFGSQSTGKSTLLNRLFNTNFDVMDESNRQQTTKGIWLAYSPVVSTTLGHTTSKSNILVMDVEGTDGRERGEDQDFERKAALFALSTSEVLIINIWETQVGLYQGANMGLLKTVFEVNLSLFGKSKLETHNDHKVLLLIVIRDHVGVTPVESLAKTFTSDLQNMWSSLAKPAELEHLQFADFFDVTFHALNHKVLQPKEFGEGINRLDDRLVVSNELFKPEYHHDVPIDGWTMYAERCWEQIETNKDLDLPTQQILVAQFKCDEIVESVFQEFLAKYQHHFKEVDAAPDFEELGALFADLRQDAFEDYDASASRYNKAVYEQKRKKLRWLINDKLKEVFDVHAKNLCNTLLEKFEKDLVALKGKDFAVNVKTLSTKLVEDVNFQVSLMSLQGDLSLDEIILALTKDIDAIVAKQQVIELNSIVNKSVKKLSASLSKSIQFELGDPNEETWDNVLQQFKGVYEKFGGDFGLGTSSTQNQQAIEKFKFKSWCQFYDVTHKLISREKLLALLQDRFDDKFRYDENGLPKLYLNEQDLEKTFAVAKQHALQVLPILTFAKLADGSEIVPDYDIFDSKLREQFLGGYDDSDDEEDHCFAEIITEQEKSEVLAKFKKEVDAKYIETKRSIVQHITQIPYYIYLIILVLGWNEFMAIIRNPLFFSLSIVLGATVYVLYYLGLLRPALVVAQRTMDEVIVMAKTKLREVLIDDHEVTGRQLNKMAGSKENIELDDM.

Topologically, residues 1 to 692 (MELSEGELSH…KRSIVQHITQ (692 aa)) are cytoplasmic. In terms of domain architecture, GB1/RHD3-type G spans 55–284 (GNNYHIISVF…VSNELFKPEY (230 aa)). 65–72 (GSQSTGKS) is a binding site for GTP. A helical membrane pass occupies residues 693–713 (IPYYIYLIILVLGWNEFMAII). Residues 714 to 716 (RNP) are Lumenal-facing. A helical transmembrane segment spans residues 717–737 (LFFSLSIVLGATVYVLYYLGL). At 738–790 (LRPALVVAQRTMDEVIVMAKTKLREVLIDDHEVTGRQLNKMAGSKENIELDDM) the chain is on the cytoplasmic side.

Belongs to the TRAFAC class dynamin-like GTPase superfamily. GB1/RHD3 GTPase family. RHD3 subfamily.

Its subcellular location is the endoplasmic reticulum membrane. Cooperates with the reticulon proteins and tubule-shaping DP1 family proteins to generate and maintain the structure of the tubular endoplasmic reticulum network. Has GTPase activity, which is required for its function in ER organization. Required for virulence and resistance to cycloheximide. The sequence is that of Protein SEY1 from Candida albicans (strain SC5314 / ATCC MYA-2876) (Yeast).